We begin with the raw amino-acid sequence, 545 residues long: Zona pellucida sperm-binding protein 4 (545 aa).

Residues 1-28 (MARQALRSTLWLLPSILLCFPFCLPLSG) form the signal peptide. The Extracellular portion of the chain corresponds to 29-518 (QHVTELPGVL…HSGTHADSPT (490 aa)). Asparagine 50 and asparagine 74 each carry an N-linked (GlcNAc...) asparagine glycan. In terms of domain architecture, P-type spans 148 to 192 (KVCSPVPVKERLPCASSTISRGDCEELGCCYSSEEEGADSCYYGN). Residues 197-471 (HCTKEGHFSI…PSCTVICPAS (275 aa)) form the ZP domain. Residue asparagine 228 is glycosylated (N-linked (GlcNAc...) asparagine). Threonine 312 is a glycosylation site (O-linked (GalNAc...) threonine). Asparagine 336 carries an N-linked (GlcNAc...) asparagine glycan. Cysteine 377 and cysteine 451 are oxidised to a cystine. Positions 472–545 (RRRRKSELYF…VSYLATRKQR (74 aa)) are cleaved as a propeptide — removed in mature form. Asparagine 483 is a glycosylation site (N-linked (GlcNAc...) asparagine). A helical transmembrane segment spans residues 519 to 539 (LWVMGLSASMVITGVLVVSYL). Residues 540-545 (ATRKQR) are Cytoplasmic-facing.

This sequence belongs to the ZP domain family. ZPB subfamily. Post-translationally, proteolytically cleaved before the transmembrane segment to yield the secreted ectodomain incorporated in the zona pellucida. As to expression, expressed in oocytes.

The protein localises to the zona pellucida. The protein resides in the cell membrane. Functionally, component of the zona pellucida, an extracellular matrix surrounding oocytes which mediates sperm binding, induction of the acrosome reaction and prevents post-fertilization polyspermy. The zona pellucida is composed of 3 to 4 glycoproteins, ZP1, ZP2, ZP3, and ZP4. ZP4 may act as a sperm receptor. This Rattus norvegicus (Rat) protein is Zona pellucida sperm-binding protein 4 (Zp4).